Here is a 171-residue protein sequence, read N- to C-terminus: Adenine phosphoribosyltransferase (171 aa).

Belongs to the purine/pyrimidine phosphoribosyltransferase family. As to quaternary structure, homodimer.

It is found in the cytoplasm. The catalysed reaction is AMP + diphosphate = 5-phospho-alpha-D-ribose 1-diphosphate + adenine. It functions in the pathway purine metabolism; AMP biosynthesis via salvage pathway; AMP from adenine: step 1/1. In terms of biological role, catalyzes a salvage reaction resulting in the formation of AMP, that is energically less costly than de novo synthesis. In Citrifermentans bemidjiense (strain ATCC BAA-1014 / DSM 16622 / JCM 12645 / Bem) (Geobacter bemidjiensis), this protein is Adenine phosphoribosyltransferase.